A 406-amino-acid polypeptide reads, in one-letter code: RILP-like protein 1 (406 aa).

Residues 5 to 99 (QLGAALDKSA…LEKEKKHKKE (95 aa)) form the RH1 domain. Positions 105-319 (DVWRGEAQDL…KVFMLQEEIA (215 aa)) form a coiled coil. 2 disordered regions span residues 234 to 272 (EVSS…PAQE) and 323 to 351 (SEEQ…NFQP). A compositionally biased stretch (basic and acidic residues) spans 241–257 (EVSRLKEKLKEQSRSNE). An RH2 domain is found at 289 to 358 (RPRFTLQELR…FQPESGIKRL (70 aa)). Residues 340–351 (TLRTNPRSNFQP) are compositionally biased toward polar residues.

Belongs to the RILPL family.

Its subcellular location is the cytoplasm. It localises to the cytosol. The protein resides in the cytoskeleton. It is found in the microtubule organizing center. The protein localises to the centrosome. Its subcellular location is the cell projection. It localises to the cilium. In terms of biological role, plays a role in the regulation of cell shape and polarity. Plays a role in cellular protein transport, including protein transport away from primary cilia. Neuroprotective protein. The protein is RILP-like protein 1 (rilpl1) of Danio rerio (Zebrafish).